The sequence spans 252 residues: Urease accessory protein UreH (252 aa).

The protein belongs to the UreD family. As to quaternary structure, ureH, UreF and UreG form a complex that acts as a GTP-hydrolysis-dependent molecular chaperone, activating the urease apoprotein by helping to assemble the nickel containing metallocenter of UreC. The UreE protein probably delivers the nickel.

Its subcellular location is the cytoplasm. Its function is as follows. Required for maturation of urease via the functional incorporation of the urease nickel metallocenter. In Helicobacter hepaticus (strain ATCC 51449 / 3B1), this protein is Urease accessory protein UreH.